Reading from the N-terminus, the 455-residue chain is Keratin, type I cuticular Ha5 (455 aa).

The tract at residues Met-1 to Glu-97 is head. The 312-residue stretch at Glu-97 to Leu-408 folds into the IF rod domain. Residues Lys-98 to Trp-132 are coil 1A. The linker 1 stretch occupies residues Cys-133–Asp-143. Positions Tyr-144–Cys-244 are coil 1B. The segment at Gln-245 to Val-260 is linker 12. The coil 2 stretch occupies residues Asp-261 to Glu-404. Residues Asp-405 to Phe-455 form a tail region.

It belongs to the intermediate filament family.

This Mus musculus (Mouse) protein is Keratin, type I cuticular Ha5.